Reading from the N-terminus, the 378-residue chain is Homoserine O-acetyltransferase (378 aa).

Residues 54–355 (NAILVCHALS…NNPAGHDSFL (302 aa)) enclose the AB hydrolase-1 domain. Catalysis depends on Ser-159, which acts as the Nucleophile. Residue Arg-228 participates in substrate binding. Active-site residues include Asp-318 and His-351. Residue Asp-352 coordinates substrate.

The protein belongs to the AB hydrolase superfamily. MetX family. As to quaternary structure, homodimer.

It is found in the cytoplasm. It carries out the reaction L-homoserine + acetyl-CoA = O-acetyl-L-homoserine + CoA. It functions in the pathway amino-acid biosynthesis; L-methionine biosynthesis via de novo pathway; O-acetyl-L-homoserine from L-homoserine: step 1/1. Its function is as follows. Transfers an acetyl group from acetyl-CoA to L-homoserine, forming acetyl-L-homoserine. This Leptospira biflexa serovar Patoc (strain Patoc 1 / Ames) protein is Homoserine O-acetyltransferase.